Consider the following 497-residue polypeptide: Serine/threonine-protein phosphatase 2A 56 kDa regulatory subunit beta isoform (497 aa).

A compositionally biased stretch (low complexity) spans 1-19 (METKLPPASTPTSPSSPGL). Disordered regions lie at residues 1–55 (METK…YQSN) and 475–497 (TQGA…GGQS). Phosphoserine; by CLK2 occurs at positions 32, 35, 44, 46, 47, and 48. Over residues 34–45 (RSLRRARPRRSH) the composition is skewed to basic residues.

The protein belongs to the phosphatase 2A regulatory subunit B56 family. In terms of assembly, component of the serine/threonine-protein phosphatase 2A complex (PP2A). This complex consists of a common heterodimeric core enzyme, composed of a 36 kDa catalytic subunit (subunit C) and a 65 kDa constant scaffold subunit (PR65 or subunit A), that associates with a variety of regulatory subunits. Proteins that associate with the core dimer include three families of regulatory subunits B (the R2/B/PR55/B55, R3/B''/PR72/PR130/PR59 and R5/B'/B56 families), the 48 kDa variable regulatory subunit, viral proteins, and cell signaling molecules. Interacts with SGO1. Interacts with AKT1. Interacts with CUL3 and KLHL15; this interaction leads to proteasomal degradation. Post-translationally, ubiquitinated by E3 CUL3-KLHL15 complex; this modification leads to proteasomal degradation. Highest expression in brain.

It is found in the cytoplasm. Functionally, as the regulatory component of the serine/threonine-protein phosphatase 2A (PP2A) holoenzyme, modulates substrate specificity, subcellular localization, and responsiveness to phosphorylation. The phosphorylated form mediates the interaction between PP2A and AKT1, leading to AKT1 dephosphorylation. The protein is Serine/threonine-protein phosphatase 2A 56 kDa regulatory subunit beta isoform (PPP2R5B) of Homo sapiens (Human).